Here is a 747-residue protein sequence, read N- to C-terminus: MDVSEVSGVPPWFADHLREEGIESLYPPQAAAVDAGVADGESLVASVPTASGKTLVAQLAMLSAIDRGGTALYIVPLRALASEKREEFAAFEEYGLSVGVTTGSYEDTGEWLADKDIIVATSEKVDSLVRNGAPWIDDLDCVVADEVHLVDDEHRGPTLEVTLAKLRRVNPNLQVVALSATVGNAGEMAEWLDAELVDSSWRPIELRKGVHYGQALHFGDGTQQELPVQRTEKPTEAVVRETLDEGGSTLVFVNSRRNAEGAAKRLAKTTVDGLDADERAALSSLAEEIRAVSDTETSDDLADCVEQGAAFHHAGCSSEHRSLVEDAFRDRLIKTICATPTLAAGVNTPARRVVVRDWRRYSGDAGGMQPLSVLEVHQMMGRAGRPGRDPYGEAVLLADSHDELDELLDRYVWADPEPVESKLAREPSMRTHLLATVASGFADSRSALLSFLDRTLYATQYRHGDGEDNLERVVDTTLSYLETNGFIDRDGDAIEATDLGHTVSRLYLDPMSAAEIIDGLADAASPTAMGLYQLVARTPDMYELYLRSGDREEYTMLAYEREAELLGELPSEFEEGRFEDWLSALKTARMLEDWASELDEDDIAERYGVGPGDIRGKVDTAEWLLGAAESLASEQDLADVSAIREARKRVEHGVGEELIDLAGVRGVGRKRARRLYDAGIETRADLRNADKSVVLAALRGREQTAENVLEAAGHQQPEMDGVTPDADVKESAAAAGTDDGQANLGDF.

Residues Q29 and 47 to 54 (VPTASGKT) each bind ATP. Residues 34–200 (DAGVADGESL…WLDAELVDSS (167 aa)) form the Helicase ATP-binding domain. The short motif at 145 to 148 (DEVH) is the DEAH box element. Positions 234-434 (PTEAVVRETL…REPSMRTHLL (201 aa)) constitute a Helicase C-terminal domain. The tract at residues 711–747 (AAGHQQPEMDGVTPDADVKESAAAAGTDDGQANLGDF) is disordered.

Belongs to the helicase family. Hel308 subfamily. As to quaternary structure, monomer.

The enzyme catalyses Couples ATP hydrolysis with the unwinding of duplex DNA by translocating in the 3'-5' direction.. It carries out the reaction ATP + H2O = ADP + phosphate + H(+). Functionally, DNA-dependent ATPase and 3'-5' DNA helicase that may be involved in repair of stalled replication forks. In Natronomonas pharaonis (strain ATCC 35678 / DSM 2160 / CIP 103997 / JCM 8858 / NBRC 14720 / NCIMB 2260 / Gabara) (Halobacterium pharaonis), this protein is ATP-dependent DNA helicase Hel308.